The following is a 208-amino-acid chain: Guanylate kinase (208 aa).

The 182-residue stretch at 4 to 185 (GNLYILSAPS…ALADFQAILR (182 aa)) folds into the Guanylate kinase-like domain. An ATP-binding site is contributed by 11 to 18 (APSGAGKS).

The protein belongs to the guanylate kinase family.

The protein localises to the cytoplasm. The enzyme catalyses GMP + ATP = GDP + ADP. Its function is as follows. Essential for recycling GMP and indirectly, cGMP. This chain is Guanylate kinase (gmk), found in Pasteurella multocida (strain Pm70).